We begin with the raw amino-acid sequence, 409 residues long: Imidazolonepropionase (409 aa).

The Fe(3+) site is built by His-78 and His-80. Residues His-78 and His-80 each coordinate Zn(2+). 4-imidazolone-5-propanoate-binding residues include Arg-87, Tyr-150, and His-183. Residue Tyr-150 participates in N-formimidoyl-L-glutamate binding. His-248 serves as a coordination point for Fe(3+). His-248 provides a ligand contact to Zn(2+). Gln-251 is a binding site for 4-imidazolone-5-propanoate. Asp-323 contacts Fe(3+). Asp-323 serves as a coordination point for Zn(2+). The N-formimidoyl-L-glutamate site is built by Asn-325 and Gly-327. Position 328 (Thr-328) interacts with 4-imidazolone-5-propanoate.

The protein belongs to the metallo-dependent hydrolases superfamily. HutI family. It depends on Zn(2+) as a cofactor. Requires Fe(3+) as cofactor.

It is found in the cytoplasm. It carries out the reaction 4-imidazolone-5-propanoate + H2O = N-formimidoyl-L-glutamate. It functions in the pathway amino-acid degradation; L-histidine degradation into L-glutamate; N-formimidoyl-L-glutamate from L-histidine: step 3/3. In terms of biological role, catalyzes the hydrolytic cleavage of the carbon-nitrogen bond in imidazolone-5-propanoate to yield N-formimidoyl-L-glutamate. It is the third step in the universal histidine degradation pathway. This is Imidazolonepropionase from Mesorhizobium japonicum (strain LMG 29417 / CECT 9101 / MAFF 303099) (Mesorhizobium loti (strain MAFF 303099)).